Here is a 359-residue protein sequence, read N- to C-terminus: Putative mannose-1-phosphate guanyltransferase (359 aa).

Belongs to the transferase hexapeptide repeat family.

The catalysed reaction is alpha-D-mannose 1-phosphate + GTP + H(+) = GDP-alpha-D-mannose + diphosphate. In Sulfolobus acidocaldarius (strain ATCC 33909 / DSM 639 / JCM 8929 / NBRC 15157 / NCIMB 11770), this protein is Putative mannose-1-phosphate guanyltransferase (mpg1).